Consider the following 202-residue polypeptide: UMP-CMP kinase 3 (202 aa).

ATP is bound at residue 24-29 (GSGKGT). The NMP stretch occupies residues 44-73 (SAGDLLRAEIKSGSENGTMIQNMIKEGKIV). A ribonucleoside 5'-phosphate-binding positions include arginine 50, 71 to 73 (KIV), and 98 to 101 (GFPR). Asparagine 105 is a binding site for CMP. An LID region spans residues 136 to 144 (GRNQGREDD). Arginine 137 is an ATP binding site. 2 residues coordinate a ribonucleoside 5'-phosphate: arginine 141 and arginine 152. Residue lysine 180 participates in ATP binding.

In terms of assembly, monomer. Mg(2+) serves as cofactor.

The protein localises to the cytoplasm. The protein resides in the nucleus. It catalyses the reaction CMP + ATP = CDP + ADP. It carries out the reaction dCMP + ATP = dCDP + ADP. The enzyme catalyses UMP + ATP = UDP + ADP. In terms of biological role, catalyzes the phosphorylation of pyrimidine nucleoside monophosphates at the expense of ATP. Plays an important role in de novo pyrimidine nucleotide biosynthesis. Has preference for UMP and CMP as phosphate acceptors. Does not act on dCMP and dUMP. This is UMP-CMP kinase 3 (UMK3) from Arabidopsis thaliana (Mouse-ear cress).